The following is a 211-amino-acid chain: Claudin-7 (211 aa).

The Cytoplasmic segment spans residues 1–7 (MANSGLQ). Residues 8–28 (LLGFSMALLGWVGLVACTAIP) form a helical membrane-spanning segment. The Extracellular segment spans residues 29 to 81 (QWQMSSYAGDNIITAQAMYKGLWMDCVTQSTGMMSCKMYDSVLALSAALQATR). The chain crosses the membrane as a helical span at residues 82-102 (ALMVVSLVLGFLAMFVATMGM). The Cytoplasmic segment spans residues 103–117 (KCTRCGGDDKVKKAR). The chain crosses the membrane as a helical span at residues 118–138 (IAMGGGIIFIVAGLAALVACS). At 139-160 (WYGHQIVTDFYNPLIPTNIKYE) the chain is on the extracellular side. A helical transmembrane segment spans residues 161–181 (FGPAIFIGWAGSALVILGGAL). Topologically, residues 182-211 (LSCSCPGNESKAGYRVPRSYPKSNSSKEYV) are cytoplasmic. Residues 210 to 211 (YV) are interactions with TJP1, TJP2 and TJP3.

Belongs to the claudin family. Directly interacts with TJP1/ZO-1, TJP2/ZO-2 and TJP3/ZO-3. The phosphorylated form interacts with EPCAM. Does not interact with CD81. In terms of processing, phosphorylated. In terms of tissue distribution, expressed in kidney, lung and prostate. Isoform 1 seems to be predominant, except in some normal prostate samples, where isoform 2 is the major form. Down-regulated in breast cancers, including ductal carcinoma in situ (DCIS), lobular carcinoma in situ (LCIS) and invasive ductal carcinoma (IDC) (at protein level), as well as in several cancer cell lines. Loss of expression correlates with histological grade, occurring predominantly in high-grade lesions.

The protein localises to the cell membrane. It is found in the basolateral cell membrane. Its subcellular location is the cell junction. It localises to the tight junction. In terms of biological role, plays a major role in tight junction-specific obliteration of the intercellular space. The sequence is that of Claudin-7 (CLDN7) from Homo sapiens (Human).